The primary structure comprises 230 residues: Demethylmenaquinone methyltransferase (230 aa).

S-adenosyl-L-methionine is bound by residues threonine 57, aspartate 77, 101–102 (DI), and serine 118.

It belongs to the class I-like SAM-binding methyltransferase superfamily. MenG/UbiE family.

It carries out the reaction a 2-demethylmenaquinol + S-adenosyl-L-methionine = a menaquinol + S-adenosyl-L-homocysteine + H(+). It participates in quinol/quinone metabolism; menaquinone biosynthesis; menaquinol from 1,4-dihydroxy-2-naphthoate: step 2/2. Methyltransferase required for the conversion of demethylmenaquinol (DMKH2) to menaquinol (MKH2). The polypeptide is Demethylmenaquinone methyltransferase (Chlamydia caviae (strain ATCC VR-813 / DSM 19441 / 03DC25 / GPIC) (Chlamydophila caviae)).